The primary structure comprises 404 residues: Probable tRNA sulfurtransferase (404 aa).

Residues 61-166 form the THUMP domain; that stretch reads EAVSERLKDV…SGYSYIMCDE (106 aa). Residues 184-185, 209-210, arginine 266, glycine 288, and glutamine 297 each bind ATP; these read LL and HF.

It belongs to the ThiI family.

The protein localises to the cytoplasm. It carries out the reaction [ThiI sulfur-carrier protein]-S-sulfanyl-L-cysteine + a uridine in tRNA + 2 reduced [2Fe-2S]-[ferredoxin] + ATP + H(+) = [ThiI sulfur-carrier protein]-L-cysteine + a 4-thiouridine in tRNA + 2 oxidized [2Fe-2S]-[ferredoxin] + AMP + diphosphate. It catalyses the reaction [ThiS sulfur-carrier protein]-C-terminal Gly-Gly-AMP + S-sulfanyl-L-cysteinyl-[cysteine desulfurase] + AH2 = [ThiS sulfur-carrier protein]-C-terminal-Gly-aminoethanethioate + L-cysteinyl-[cysteine desulfurase] + A + AMP + 2 H(+). Its pathway is cofactor biosynthesis; thiamine diphosphate biosynthesis. In terms of biological role, catalyzes the ATP-dependent transfer of a sulfur to tRNA to produce 4-thiouridine in position 8 of tRNAs, which functions as a near-UV photosensor. Also catalyzes the transfer of sulfur to the sulfur carrier protein ThiS, forming ThiS-thiocarboxylate. This is a step in the synthesis of thiazole, in the thiamine biosynthesis pathway. The sulfur is donated as persulfide by IscS. This Bacillus cereus (strain B4264) protein is Probable tRNA sulfurtransferase.